A 264-amino-acid chain; its full sequence is Low molecular mass lipoprotein PBMHPC-23 (264 aa).

The first 23 residues, 1-23, serve as a signal peptide directing secretion; that stretch reads MKFLVVFAVVRACVTPACAEMSA.

Belongs to the 30 kDa lipoprotein family.

It localises to the secreted. The polypeptide is Low molecular mass lipoprotein PBMHPC-23 (Bombyx mori (Silk moth)).